We begin with the raw amino-acid sequence, 24 residues long: Ascaphin-5 (24 aa).

In terms of tissue distribution, expressed by the skin glands.

The protein resides in the secreted. In terms of biological role, antimicrobial peptide. Synthetic peptide shows higher potency against Gram-negative bacteria than against Gram-positive bacteria. Has a very week hemolytic activity. This chain is Ascaphin-5, found in Ascaphus truei (Coastal tailed frog).